The chain runs to 217 residues: Large ribosomal subunit protein uL4 (217 aa).

The segment at 42-100 is disordered; sequence RAAARQGTHSTKTRGDVSGGGRKPYRQKGTGRARQGSTRAPQFTGGGVVHGPKPRDYSQ.

The protein belongs to the universal ribosomal protein uL4 family. Part of the 50S ribosomal subunit.

In terms of biological role, one of the primary rRNA binding proteins, this protein initially binds near the 5'-end of the 23S rRNA. It is important during the early stages of 50S assembly. It makes multiple contacts with different domains of the 23S rRNA in the assembled 50S subunit and ribosome. Forms part of the polypeptide exit tunnel. The chain is Large ribosomal subunit protein uL4 from Mycolicibacterium paratuberculosis (strain ATCC BAA-968 / K-10) (Mycobacterium paratuberculosis).